A 353-amino-acid chain; its full sequence is Methylthioribose-1-phosphate isomerase (353 aa).

Substrate contacts are provided by residues 51–53 (RGA), arginine 94, and glutamine 199. Catalysis depends on aspartate 240, which acts as the Proton donor. 250–251 (NK) lines the substrate pocket.

This sequence belongs to the EIF-2B alpha/beta/delta subunits family. MtnA subfamily. As to quaternary structure, homodimer.

It carries out the reaction 5-(methylsulfanyl)-alpha-D-ribose 1-phosphate = 5-(methylsulfanyl)-D-ribulose 1-phosphate. Its pathway is amino-acid biosynthesis; L-methionine biosynthesis via salvage pathway; L-methionine from S-methyl-5-thio-alpha-D-ribose 1-phosphate: step 1/6. Functionally, catalyzes the interconversion of methylthioribose-1-phosphate (MTR-1-P) into methylthioribulose-1-phosphate (MTRu-1-P). In Bacillus cereus (strain ATCC 14579 / DSM 31 / CCUG 7414 / JCM 2152 / NBRC 15305 / NCIMB 9373 / NCTC 2599 / NRRL B-3711), this protein is Methylthioribose-1-phosphate isomerase.